The chain runs to 380 residues: Chaperone protein DnaJ (380 aa).

The region spanning 5–72 (DYYETLGVAK…QKRAAYDQYG (68 aa)) is the J domain. A CR-type zinc finger spans residues 140–218 (GKDTQIRIPS…CNGAGRIKSN (79 aa)). Cys153, Cys156, Cys170, Cys173, Cys192, Cys195, Cys206, and Cys209 together coordinate Zn(2+). CXXCXGXG motif repeat units follow at residues 153-160 (CSTCDGTG), 170-177 (CPTCSGSG), 192-199 (CPSCHGTG), and 206-213 (CTACNGAG). The tract at residues 357–380 (LKKGGERHSPNAKSWTDRVKDLFK) is disordered.

It belongs to the DnaJ family. Homodimer. Requires Zn(2+) as cofactor.

It localises to the cytoplasm. In terms of biological role, participates actively in the response to hyperosmotic and heat shock by preventing the aggregation of stress-denatured proteins and by disaggregating proteins, also in an autonomous, DnaK-independent fashion. Unfolded proteins bind initially to DnaJ; upon interaction with the DnaJ-bound protein, DnaK hydrolyzes its bound ATP, resulting in the formation of a stable complex. GrpE releases ADP from DnaK; ATP binding to DnaK triggers the release of the substrate protein, thus completing the reaction cycle. Several rounds of ATP-dependent interactions between DnaJ, DnaK and GrpE are required for fully efficient folding. Also involved, together with DnaK and GrpE, in the DNA replication of plasmids through activation of initiation proteins. This Methylibium petroleiphilum (strain ATCC BAA-1232 / LMG 22953 / PM1) protein is Chaperone protein DnaJ.